The chain runs to 331 residues: Glyceraldehyde-3-phosphate dehydrogenase (331 aa).

NAD(+) is bound by residues 10–11, aspartate 31, lysine 75, and threonine 117; that span reads RI. D-glyceraldehyde 3-phosphate-binding positions include 148–150 and threonine 179; that span reads SCT. The active-site Nucleophile is the cysteine 149. An NAD(+)-binding site is contributed by asparagine 180. D-glyceraldehyde 3-phosphate is bound by residues arginine 194, 207–208, and arginine 230; that span reads TG. Asparagine 311 is a binding site for NAD(+).

The protein belongs to the glyceraldehyde-3-phosphate dehydrogenase family. In terms of assembly, homotetramer.

It localises to the cytoplasm. It catalyses the reaction D-glyceraldehyde 3-phosphate + phosphate + NAD(+) = (2R)-3-phospho-glyceroyl phosphate + NADH + H(+). It participates in carbohydrate degradation; glycolysis; pyruvate from D-glyceraldehyde 3-phosphate: step 1/5. Functionally, catalyzes the oxidative phosphorylation of glyceraldehyde 3-phosphate (G3P) to 1,3-bisphosphoglycerate (BPG) using the cofactor NAD. The first reaction step involves the formation of a hemiacetal intermediate between G3P and a cysteine residue, and this hemiacetal intermediate is then oxidized to a thioester, with concomitant reduction of NAD to NADH. The reduced NADH is then exchanged with the second NAD, and the thioester is attacked by a nucleophilic inorganic phosphate to produce BPG. This chain is Glyceraldehyde-3-phosphate dehydrogenase (gap), found in Thermus aquaticus.